Here is a 234-residue protein sequence, read N- to C-terminus: Small ribosomal subunit protein uS3 (234 aa).

One can recognise a KH type-2 domain in the interval 39–107 (IRKMLKERLK…EVHLNLVEVR (69 aa)). The span at 215–227 (QERRLQESGEQRA) shows a compositional bias: basic and acidic residues. The tract at residues 215-234 (QERRLQESGEQRARSGRQAA) is disordered.

This sequence belongs to the universal ribosomal protein uS3 family. As to quaternary structure, part of the 30S ribosomal subunit. Forms a tight complex with proteins S10 and S14.

Its function is as follows. Binds the lower part of the 30S subunit head. Binds mRNA in the 70S ribosome, positioning it for translation. The polypeptide is Small ribosomal subunit protein uS3 (Maricaulis maris (strain MCS10) (Caulobacter maris)).